The chain runs to 138 residues: PilB-specific inhibitory protein CpiA (138 aa).

Interacts with PilB but not with TfpB.

Its function is as follows. Acts as a PilB inhibitor to control natural transformation. Inhibits type IV pili (T4P) extension by specifically binding and inhibiting the pilus extension ATPase PilB but not TfpB. This activity probably modulates T4P extension under different environmental conditions. In Acinetobacter baylyi (strain ATCC 33305 / BD413 / ADP1), this protein is PilB-specific inhibitory protein CpiA.